A 225-amino-acid chain; its full sequence is C-reactive protein (225 aa).

The first 20 residues, 1-20 (MEKLLWCFLTLVSFSNMSDQ), serve as a signal peptide directing secretion. One can recognise a Pentraxin (PTX) domain in the interval 24–225 (HKKAFVFPKE…EVHVKPQLWP (202 aa)). A disulfide bridge links Cys-55 with Cys-116. Ca(2+)-binding residues include Asn-80, Gln-158, Asp-159, and Gln-169.

The protein belongs to the pentraxin family. As to quaternary structure, homopentamer. Pentraxin (or pentaxin) have a discoid arrangement of 5 non-covalently bound subunits. Interacts with FCN1; may regulate monocyte activation by FCN1. Ca(2+) serves as cofactor. Found in plasma.

The protein resides in the secreted. Its function is as follows. Displays several functions associated with host defense: it promotes agglutination, bacterial capsular swelling, phagocytosis and complement fixation through its calcium-dependent binding to phosphorylcholine. Can interact with DNA and histones and may scavenge nuclear material released from damaged circulating cells. The chain is C-reactive protein (CRP) from Oryctolagus cuniculus (Rabbit).